A 248-amino-acid chain; its full sequence is Deoxyribose-phosphate aldolase (248 aa).

The active-site Proton donor/acceptor is D117. K179 functions as the Schiff-base intermediate with acetaldehyde in the catalytic mechanism. The active-site Proton donor/acceptor is K208.

This sequence belongs to the DeoC/FbaB aldolase family. DeoC type 1 subfamily.

It is found in the cytoplasm. It carries out the reaction 2-deoxy-D-ribose 5-phosphate = D-glyceraldehyde 3-phosphate + acetaldehyde. It functions in the pathway carbohydrate degradation; 2-deoxy-D-ribose 1-phosphate degradation; D-glyceraldehyde 3-phosphate and acetaldehyde from 2-deoxy-alpha-D-ribose 1-phosphate: step 2/2. Functionally, catalyzes a reversible aldol reaction between acetaldehyde and D-glyceraldehyde 3-phosphate to generate 2-deoxy-D-ribose 5-phosphate. The polypeptide is Deoxyribose-phosphate aldolase (Thermotoga maritima (strain ATCC 43589 / DSM 3109 / JCM 10099 / NBRC 100826 / MSB8)).